The sequence spans 42 residues: Photosystem I reaction center subunit IX (42 aa).

A helical membrane pass occupies residues 7–27 (FLSSAPVLIMALLTFTAGILI).

This sequence belongs to the PsaJ family.

It is found in the cellular thylakoid membrane. In terms of biological role, may help in the organization of the PsaE and PsaF subunits. The chain is Photosystem I reaction center subunit IX from Microcystis aeruginosa (strain NIES-843 / IAM M-2473).